Consider the following 1482-residue polypeptide: Chromosome partition protein MukB (1482 aa).

34–41 serves as a coordination point for ATP; sequence GGNGAGKS. 5 coiled-coil regions span residues 326 to 472, 507 to 602, 780 to 805, 832 to 1110, and 1209 to 1265; these read LEAD…QTAH, NQRH…RRAP, RAAR…ATLS, DDPE…REQV, and VEAI…LQSV. Positions 666–783 are flexible hinge; it reads PGGSEDPRLN…SLPLFGRAAR (118 aa).

This sequence belongs to the SMC family. MukB subfamily. As to quaternary structure, homodimerization via its hinge domain. Binds to DNA via its C-terminal region. Interacts, and probably forms a ternary complex, with MukE and MukF via its C-terminal region. The complex formation is stimulated by calcium or magnesium. Interacts with tubulin-related protein FtsZ.

Its subcellular location is the cytoplasm. It localises to the nucleoid. Functionally, plays a central role in chromosome condensation, segregation and cell cycle progression. Functions as a homodimer, which is essential for chromosome partition. Involved in negative DNA supercoiling in vivo, and by this means organize and compact chromosomes. May achieve or facilitate chromosome segregation by condensation DNA from both sides of a centrally located replisome during cell division. The sequence is that of Chromosome partition protein MukB from Klebsiella pneumoniae subsp. pneumoniae (strain ATCC 700721 / MGH 78578).